Here is a 183-residue protein sequence, read N- to C-terminus: Large ribosomal subunit protein uL5 (183 aa).

The protein belongs to the universal ribosomal protein uL5 family. Part of the 50S ribosomal subunit; part of the 5S rRNA/L5/L18/L25 subcomplex. Contacts the 5S rRNA and the P site tRNA. Forms a bridge to the 30S subunit in the 70S ribosome.

Functionally, this is one of the proteins that bind and probably mediate the attachment of the 5S RNA into the large ribosomal subunit, where it forms part of the central protuberance. In the 70S ribosome it contacts protein S13 of the 30S subunit (bridge B1b), connecting the 2 subunits; this bridge is implicated in subunit movement. Contacts the P site tRNA; the 5S rRNA and some of its associated proteins might help stabilize positioning of ribosome-bound tRNAs. The chain is Large ribosomal subunit protein uL5 from Leptospira biflexa serovar Patoc (strain Patoc 1 / Ames).